Consider the following 225-residue polypeptide: Red fluorescent protein drFP583 (225 aa).

Positions Gln66–Gly68 form a cross-link, 2-iminomethyl-5-imidazolinone (Gln-Gly). Tyr67 carries the post-translational modification (Z)-2,3-didehydrotyrosine.

Belongs to the GFP family. In terms of assembly, homotetramer. Post-translationally, contains a chromophore consisting of modified amino acid residues. The chromophore is formed by autocatalytic backbone condensation between Xaa-N and Gly-(N+2), oxidation of Tyr-(N+1) to didehydrotyrosine, and formation of a double bond to the alpha-amino nitrogen of residue Xaa-N. Maturation of the chromophore requires nothing other than molecular oxygen.

Its function is as follows. Thought to play a role in photoprotection of the coral's resident symbiont microalgae's photosystems from photoinhibition caused by high light levels found near the surface of coral reefs. In deeper water, the fluorescence may be to convert blue light into longer wavelengths more suitable for use in photosynthesis by the microalgal symbionts. This chain is Red fluorescent protein drFP583, found in Discosoma sp. (Sea anemone).